Consider the following 422-residue polypeptide: Dihydroorotase (422 aa).

The Zn(2+) site is built by His-59 and His-61. Residues 61 to 63 (HFR) and Asn-93 contribute to the substrate site. Residues Asp-150, His-177, and His-230 each contribute to the Zn(2+) site. Asn-276 serves as a coordination point for substrate. Position 303 (Asp-303) interacts with Zn(2+). Asp-303 is a catalytic residue. His-307 is a substrate binding site.

This sequence belongs to the metallo-dependent hydrolases superfamily. DHOase family. Class I DHOase subfamily. The cofactor is Zn(2+).

It carries out the reaction (S)-dihydroorotate + H2O = N-carbamoyl-L-aspartate + H(+). It participates in pyrimidine metabolism; UMP biosynthesis via de novo pathway; (S)-dihydroorotate from bicarbonate: step 3/3. Catalyzes the reversible cyclization of carbamoyl aspartate to dihydroorotate. This Streptococcus pyogenes serotype M1 protein is Dihydroorotase.